The primary structure comprises 212 residues: Thymidylate kinase (212 aa).

Residue 10–17 coordinates ATP; that stretch reads GPDGSGKS.

This sequence belongs to the thymidylate kinase family.

The enzyme catalyses dTMP + ATP = dTDP + ADP. Its function is as follows. Phosphorylation of dTMP to form dTDP in both de novo and salvage pathways of dTTP synthesis. The chain is Thymidylate kinase from Exiguobacterium sp. (strain ATCC BAA-1283 / AT1b).